The primary structure comprises 68 residues: Small ribosomal subunit protein bS21 (68 aa).

It belongs to the bacterial ribosomal protein bS21 family.

The protein is Small ribosomal subunit protein bS21 of Ruegeria pomeroyi (strain ATCC 700808 / DSM 15171 / DSS-3) (Silicibacter pomeroyi).